We begin with the raw amino-acid sequence, 294 residues long: MTSRRIINREQRQCSQIRPYLYVSGLAALSPRVLSRFCVCINLIPGFRLSAPPHMKVVHLPLQDNETTDLSPHWANVYKEIEEARKGAGRALLLCAMGISRSATFGIAYVMQYEKKTLHDSYKAVQLARNIICPNVGFFQQLIDLEQKLRGKVSCKIIEPLPGCKVPDVIWQELYDEMIMSMSQDDRHSLASCNLSARSTTNDTMSLRSLNMVNDTSRSLASFHLTHRPIGASPTLLVPSSSSSSSVRGPIPLQRAHTEPPKEASILPKSALRDKSKSGEKKKKWRLSFHKDVV.

Positions 13 to 151 (QCSQIRPYLY…LIDLEQKLRG (139 aa)) constitute a Tyrosine-protein phosphatase domain. Catalysis depends on C95, which acts as the Phosphocysteine intermediate. The segment at 234-294 (PTLLVPSSSS…WRLSFHKDVV (61 aa)) is disordered.

Belongs to the protein-tyrosine phosphatase family. Non-receptor class dual specificity subfamily.

This is an uncharacterized protein from Caenorhabditis elegans.